We begin with the raw amino-acid sequence, 306 residues long: Methionyl-tRNA formyltransferase (306 aa).

110-113 (SLLP) contributes to the (6S)-5,6,7,8-tetrahydrofolate binding site.

Belongs to the Fmt family.

The catalysed reaction is L-methionyl-tRNA(fMet) + (6R)-10-formyltetrahydrofolate = N-formyl-L-methionyl-tRNA(fMet) + (6S)-5,6,7,8-tetrahydrofolate + H(+). In terms of biological role, attaches a formyl group to the free amino group of methionyl-tRNA(fMet). The formyl group appears to play a dual role in the initiator identity of N-formylmethionyl-tRNA by promoting its recognition by IF2 and preventing the misappropriation of this tRNA by the elongation apparatus. The polypeptide is Methionyl-tRNA formyltransferase (Brucella ovis (strain ATCC 25840 / 63/290 / NCTC 10512)).